The chain runs to 82 residues: Putative membrane protein insertion efficiency factor (82 aa).

This sequence belongs to the UPF0161 family.

The protein localises to the cell membrane. In terms of biological role, could be involved in insertion of integral membrane proteins into the membrane. The sequence is that of Putative membrane protein insertion efficiency factor from Streptococcus thermophilus (strain ATCC BAA-491 / LMD-9).